The following is a 56-amino-acid chain: Putative 2-Cys peroxiredoxin BAS1 (56 aa).

The protein belongs to the peroxiredoxin family. AhpC/Prx1 subfamily. In terms of assembly, homodimer; disulfide-linked, upon oxidation.

The protein resides in the plastid. It localises to the chloroplast. It carries out the reaction a hydroperoxide + [thioredoxin]-dithiol = an alcohol + [thioredoxin]-disulfide + H2O. In terms of biological role, thiol-specific peroxidase that catalyzes the reduction of hydrogen peroxide and organic hydroperoxides to water and alcohols, respectively. Plays a role in cell protection against oxidative stress by detoxifying peroxides. May be an antioxidant enzyme particularly in the developing shoot and photosynthesizing leaf. The sequence is that of Putative 2-Cys peroxiredoxin BAS1 from Pinus strobus (Eastern white pine).